Here is a 412-residue protein sequence, read N- to C-terminus: Peptidase T (412 aa).

Position 78 (His-78) interacts with Zn(2+). Asp-80 is an active-site residue. Position 140 (Asp-140) interacts with Zn(2+). Residue Glu-173 is the Proton acceptor of the active site. Zn(2+)-binding residues include Glu-174, Asp-196, and His-379.

The protein belongs to the peptidase M20B family. It depends on Zn(2+) as a cofactor.

Its subcellular location is the cytoplasm. The catalysed reaction is Release of the N-terminal residue from a tripeptide.. Its function is as follows. Cleaves the N-terminal amino acid of tripeptides. This chain is Peptidase T, found in Edwardsiella ictaluri (strain 93-146).